The primary structure comprises 465 residues: ATP-sulfurylase 3, chloroplastic (465 aa).

Residues 1-49 constitute a chloroplast transit peptide; that stretch reads MASMSTVFPKPTSFISQPLTKSHKSDSVTTSISFPSNSKTRSLRTISVR.

The protein belongs to the sulfate adenylyltransferase family. Homotetramer.

It localises to the plastid. It is found in the chloroplast stroma. It carries out the reaction sulfate + ATP + H(+) = adenosine 5'-phosphosulfate + diphosphate. It functions in the pathway sulfur metabolism; hydrogen sulfide biosynthesis; sulfite from sulfate: step 1/3. This chain is ATP-sulfurylase 3, chloroplastic (APS3), found in Arabidopsis thaliana (Mouse-ear cress).